Reading from the N-terminus, the 156-residue chain is Type IV major fimbrial protein FimA (156 aa).

A propeptide spans M1–G7 (leader sequence). F8 is modified (N-methylphenylalanine). Residues F8–I28 traverse the membrane as a helical segment. 2 disulfide bridges follow: C57–C67 and C140–C153.

This sequence belongs to the N-Me-Phe pilin family. The pili are polar flexible filaments of about 5.4 nanometers diameter and 2.5 micrometers average length; they consist of only a single polypeptide chain arranged in a helical configuration of five subunits per turn in the assembled pilus.

It is found in the fimbrium. It localises to the membrane. In terms of biological role, major component of the type IV fimbriae that plays an essential role in twitching motility, natural transformation, and protease secretion. The chain is Type IV major fimbrial protein FimA (fimA) from Dichelobacter nodosus (Bacteroides nodosus).